We begin with the raw amino-acid sequence, 518 residues long: Nuclear receptor ROR-gamma (518 aa).

The modulating stretch occupies residues 1-30; that stretch reads MDRAPQRQHQASRELLAAKKTHTSQIEVIP. 2 NR C4-type zinc fingers span residues 31–51 and 67–91; these read CKICGDKSSGIHYGVITCEGC and CTRQQNCPIDRTSRNRCQHCRLQKC. Residues 31–96 constitute a DNA-binding region (nuclear receptor); it reads CKICGDKSSG…RLQKCLALGM (66 aa). Disordered stretches follow at residues 105–183 and 238–258; these read RMSK…SGSG and HPGLGELGQGPDSYGSPSFRS. A compositionally biased stretch (basic and acidic residues) spans 109–118; that stretch reads KQRDSLHAEV. Residues 119-130 are compositionally biased toward low complexity; it reads QKQLQQRQQQQQ. Positions 269–508 constitute an NR LBD domain; it reads EIEHLVQSVC…PPLYKELFST (240 aa). An AF-2 motif is present at residues 501–506; the sequence is LYKELF.

This sequence belongs to the nuclear hormone receptor family. NR1 subfamily. As to quaternary structure, interacts (via AF-2 motif) with the coactivators NCOA1, NCOA2 and PPARGC1A (via LXXLL motif). Interacts with the corepressor NCOR1. Interacts with CRY1. Interacts (via AF-2 motif) with PROX1. Interacts with FOXP3. Interacts with NR0B2.

Its subcellular location is the nucleus. In terms of biological role, nuclear receptor that binds DNA as a monomer to ROR response elements (RORE) containing a single core motif half-site 5'-AGGTCA-3' preceded by a short A-T-rich sequence. Key regulator of cellular differentiation, immunity, peripheral circadian rhythm as well as lipid, steroid, xenobiotics and glucose metabolism. Considered to have intrinsic transcriptional activity, have some natural ligands like oxysterols that act as agonists (25-hydroxycholesterol) or inverse agonists (7-oxygenated sterols), enhancing or repressing the transcriptional activity, respectively. Recruits distinct combinations of cofactors to target gene regulatory regions to modulate their transcriptional expression, depending on the tissue, time and promoter contexts. Regulates the circadian expression of clock genes such as CRY1, BMAL1 and NR1D1 in peripheral tissues and in a tissue-selective manner. Competes with NR1D1 for binding to their shared DNA response element on some clock genes such as BMAL1, CRY1 and NR1D1 itself, resulting in NR1D1-mediated repression or RORC-mediated activation of the expression, leading to the circadian pattern of clock genes expression. Therefore influences the period length and stability of the clock. Involved in the regulation of the rhythmic expression of genes involved in glucose and lipid metabolism, including PLIN2 and AVPR1A. Negative regulator of adipocyte differentiation through the regulation of early phase genes expression, such as MMP3. Controls adipogenesis as well as adipocyte size and modulates insulin sensitivity in obesity. In liver, has specific and redundant functions with RORA as positive or negative modulator of expression of genes encoding phase I and Phase II proteins involved in the metabolism of lipids, steroids and xenobiotics, such as SULT1E1. Also plays a role in the regulation of hepatocyte glucose metabolism through the regulation of G6PC1 and PCK1. Essential for thymopoiesis and the development of several secondary lymphoid tissues, including lymph nodes and Peyer's patches. Required for the generation of LTi (lymphoid tissue inducer) cells. Regulates thymocyte survival through DNA-binding on ROREs of target gene promoter regions and recruitment of coactivaros via the AF-2. Also plays a key role, downstream of IL6 and TGFB and synergistically with RORA, for lineage specification of uncommitted CD4(+) T-helper (T(H)) cells into T(H)17 cells, antagonizing the T(H)1 program. Probably regulates IL17 and IL17F expression on T(H) by binding to the essential enhancer conserved non-coding sequence 2 (CNS2) in the IL17-IL17F locus. May also play a role in the pre-TCR activation cascade leading to the maturation of alpha/beta T-cells and may participate in the regulation of DNA accessibility in the TCR-J(alpha) locus. Regulates the rhythmic expression of PROX1 and promotes its nuclear localization. Plays an indispensable role in the induction of IFN-gamma dependent anti-mycobacterial systemic immunity. The sequence is that of Nuclear receptor ROR-gamma (RORC) from Pongo abelii (Sumatran orangutan).